Here is a 22-residue protein sequence, read N- to C-terminus: thr operon leader peptide (22 aa).

The protein belongs to the thr operon leader peptide family.

This protein is involved in control of the biosynthesis of threonine. The sequence is that of thr operon leader peptide from Yersinia enterocolitica serotype O:8 / biotype 1B (strain NCTC 13174 / 8081).